The primary structure comprises 249 residues: Putative ABC transporter ATP-binding protein GSU1281 (249 aa).

An ABC transporter domain is found at 6–236; it reads VEVRDLCHCY…DELLATCRLE (231 aa). 39–46 contacts ATP; that stretch reads GANGAGKS.

The protein belongs to the ABC transporter superfamily.

Its subcellular location is the cell inner membrane. Its function is as follows. Probably part of an ABC transporter complex. Responsible for energy coupling to the transport system. This chain is Putative ABC transporter ATP-binding protein GSU1281, found in Geobacter sulfurreducens (strain ATCC 51573 / DSM 12127 / PCA).